We begin with the raw amino-acid sequence, 343 residues long: Sulfate/thiosulfate import ATP-binding protein CysA (343 aa).

One can recognise an ABC transporter domain in the interval 3-237 (IRISHLRKQF…PASPFVYSFV (235 aa)). 35 to 42 (GPSGSGKT) is a binding site for ATP.

Belongs to the ABC transporter superfamily. Sulfate/tungstate importer (TC 3.A.1.6) family. In terms of assembly, the complex is composed of two ATP-binding proteins (CysA), two transmembrane proteins (CysT and CysW) and a solute-binding protein (CysP).

It localises to the cell inner membrane. It catalyses the reaction sulfate(out) + ATP + H2O = sulfate(in) + ADP + phosphate + H(+). The catalysed reaction is thiosulfate(out) + ATP + H2O = thiosulfate(in) + ADP + phosphate + H(+). Part of the ABC transporter complex CysAWTP involved in sulfate/thiosulfate import. Responsible for energy coupling to the transport system. The protein is Sulfate/thiosulfate import ATP-binding protein CysA of Xanthomonas campestris pv. campestris (strain ATCC 33913 / DSM 3586 / NCPPB 528 / LMG 568 / P 25).